The sequence spans 415 residues: Methylthioribose-1-phosphate isomerase (415 aa).

Asp284 serves as the catalytic Proton donor.

Belongs to the eIF-2B alpha/beta/delta subunits family. MtnA subfamily.

The protein localises to the cytoplasm. It is found in the nucleus. It carries out the reaction 5-(methylsulfanyl)-alpha-D-ribose 1-phosphate = 5-(methylsulfanyl)-D-ribulose 1-phosphate. The protein operates within amino-acid biosynthesis; L-methionine biosynthesis via salvage pathway; L-methionine from S-methyl-5-thio-alpha-D-ribose 1-phosphate: step 1/6. Its function is as follows. Catalyzes the interconversion of methylthioribose-1-phosphate (MTR-1-P) into methylthioribulose-1-phosphate (MTRu-1-P). In Vanderwaltozyma polyspora (strain ATCC 22028 / DSM 70294 / BCRC 21397 / CBS 2163 / NBRC 10782 / NRRL Y-8283 / UCD 57-17) (Kluyveromyces polysporus), this protein is Methylthioribose-1-phosphate isomerase.